The chain runs to 412 residues: MNLKQELIERFTRYVKIDTQSNEDSHTVPTTPGQIEFGKLLVEELKEIGLTEVTMDDNGYVMATLPANTDKDVPVIGFLAHLDTATDFTGKNVKPQIHENFDGNAITLNEELNVVLTPEQFPELPSYKGHTIITTDGTTLLGADDKAGLTEIMVAMNYLIHNPQIKHGKIRVAFTPDEEIGRGPAHFDVEAFGASFAYTMDGGPLGGLEYESFNAAGAKLTFNGTNTHPGTAKNKMRNATKLAMEFNSYLPVEEAPEYTEGYEGFYHLLSLNGDVEQSKAYYIIRDFDRENFEARKHNVENIVKQMQEKYGRDAVVLEMNDQYYNMLEKIEPVREIVDIAYEAMKSLNIEPNIHPIRGGTDGSQLSYMGLPTPNIFTGGENYHGKFEYVSVDVMEKAVQVIIEIARRFEEQA.

A Zn(2+)-binding site is contributed by His-81. Residue Asp-83 is part of the active site. A Zn(2+)-binding site is contributed by Asp-144. The active-site Proton acceptor is the Glu-178. Zn(2+) is bound by residues Glu-179, Asp-201, and His-383.

This sequence belongs to the peptidase M20B family. Zn(2+) serves as cofactor.

The protein localises to the cytoplasm. It carries out the reaction Release of the N-terminal residue from a tripeptide.. Its function is as follows. Cleaves the N-terminal amino acid of tripeptides. This Bacillus cereus (strain Q1) protein is Peptidase T.